The sequence spans 901 residues: Protein translocase subunit SecA (901 aa).

Residues Gln-87, 105–109, and Asp-512 contribute to the ATP site; that span reads GEGKT. Cys-885, Cys-887, Cys-896, and His-897 together coordinate Zn(2+).

It belongs to the SecA family. As to quaternary structure, monomer and homodimer. Part of the essential Sec protein translocation apparatus which comprises SecA, SecYEG and auxiliary proteins SecDF-YajC and YidC. Zn(2+) serves as cofactor.

The protein resides in the cell inner membrane. The protein localises to the cytoplasm. The catalysed reaction is ATP + H2O + cellular proteinSide 1 = ADP + phosphate + cellular proteinSide 2.. In terms of biological role, part of the Sec protein translocase complex. Interacts with the SecYEG preprotein conducting channel. Has a central role in coupling the hydrolysis of ATP to the transfer of proteins into and across the cell membrane, serving both as a receptor for the preprotein-SecB complex and as an ATP-driven molecular motor driving the stepwise translocation of polypeptide chains across the membrane. The protein is Protein translocase subunit SecA of Salmonella typhi.